The primary structure comprises 212 residues: Ribosomal RNA small subunit methyltransferase G (212 aa).

S-adenosyl-L-methionine is bound by residues G73, 127–128 (IE), and R143.

It belongs to the methyltransferase superfamily. RNA methyltransferase RsmG family.

The protein resides in the cytoplasm. It catalyses the reaction guanosine(527) in 16S rRNA + S-adenosyl-L-methionine = N(7)-methylguanosine(527) in 16S rRNA + S-adenosyl-L-homocysteine. In terms of biological role, specifically methylates the N7 position of guanine in position 527 of 16S rRNA. In Methylobacterium sp. (strain 4-46), this protein is Ribosomal RNA small subunit methyltransferase G.